Reading from the N-terminus, the 1043-residue chain is Phosphatidylinositol 4,5-bisphosphate 3-kinase catalytic subunit delta isoform (1043 aa).

Positions 16 to 105 (ESQSVVVDFL…LPVLRLVARE (90 aa)) constitute a PI3K-ABD domain. Positions 187 to 278 (NRALLVNVKF…GLTPHLTMVH (92 aa)) constitute a PI3K-RBD domain. The tract at residues 287 to 312 (DEQSNPAPQVQKPRAKPPPIPAKKPS) is disordered. The C2 PI3K-type domain occupies 319–476 (LEQPFSIELI…SAAALVIYLP (158 aa)). The PIK helical domain maps to 496-673 (RHGERGRITE…GLIMEAYCRG (178 aa)). Tyrosine 523 is subject to Phosphotyrosine. Residues 744 to 1026 (CVEQCTFMDS…KFNEALRESW (283 aa)) form the PI3K/PI4K catalytic domain. The G-loop stretch occupies residues 750–756 (FMDSKMK). Positions 889 to 897 (GIGDRHSDN) are catalytic loop. Positions 908–934 (HIDFGHFLGNFKTKFGINRERVPFILT) are activation loop. Serine 1038 is subject to Phosphoserine; by autocatalysis.

The protein belongs to the PI3/PI4-kinase family. Heterodimer of a catalytic subunit PIK3CD and a p85 regulatory subunit (PIK3R1, PIK3R2 or PIK3R3). Interacts with ERAS and HRAS. Autophosphorylation on Ser-1038 results in the almost complete inactivation of the lipid kinase activity. In terms of tissue distribution, abundantly expressed in adult mouse spleen as well as in testis. Isoform 1 is expressed in spleen and lung (at protein level). Isoform 1 is expressed predominantly in leukocytes.

The protein localises to the cytoplasm. It catalyses the reaction a 1,2-diacyl-sn-glycero-3-phospho-(1D-myo-inositol-4,5-bisphosphate) + ATP = a 1,2-diacyl-sn-glycero-3-phospho-(1D-myo-inositol-3,4,5-trisphosphate) + ADP + H(+). The catalysed reaction is a 1,2-diacyl-sn-glycero-3-phospho-(1D-myo-inositol) + ATP = a 1,2-diacyl-sn-glycero-3-phospho-(1D-myo-inositol-3-phosphate) + ADP + H(+). It carries out the reaction 1-octadecanoyl-2-(5Z,8Z,11Z,14Z)-eicosatetraenoyl-sn-glycero-3-phospho-1D-myo-inositol 4,5-bisphosphate + ATP = 1-octadecanoyl-2-(5Z,8Z,11Z,14Z-eicosatetraenoyl)-sn-glycero-3-phospho-(1D-myo-inositol 3,4,5-triphosphate) + ADP + H(+). It participates in phospholipid metabolism; phosphatidylinositol phosphate biosynthesis. Its activity is regulated as follows. Activated by growth factors and cytokine receptors through a tyrosine-kinase-dependent mechanism. Activated by RAS. IC87114 inhibits lipid kinase activity and is selective in cells at doses up to 5-10 uM. Among other effects, IC87114 reduces allergic responses, prevents the recruitment of antigen-specific T cells into target tissue, and affects natural killer cell chemotaxis. Phosphoinositide-3-kinase (PI3K) phosphorylates phosphatidylinositol (PI) and its phosphorylated derivatives at position 3 of the inositol ring to produce 3-phosphoinositides. Uses ATP and PtdIns(4,5)P2 (phosphatidylinositol 4,5-bisphosphate) to generate phosphatidylinositol 3,4,5-trisphosphate (PIP3). PIP3 plays a key role by recruiting PH domain-containing proteins to the membrane, including AKT1 and PDPK1, activating signaling cascades involved in cell growth, survival, proliferation, motility and morphology. Mediates immune responses. Plays a role in B-cell development, proliferation, migration, and function. Required for B-cell receptor (BCR) signaling. Mediates B-cell proliferation response to anti-IgM, anti-CD40 and IL4 stimulation. Promotes cytokine production in response to TLR4 and TLR9. Required for antibody class switch mediated by TLR9. Involved in the antigen presentation function of B-cells. Involved in B-cell chemotaxis in response to CXCL13 and sphingosine 1-phosphate (S1P). Required for proliferation, signaling and cytokine production of naive, effector and memory T-cells. Required for T-cell receptor (TCR) signaling. Mediates TCR signaling events at the immune synapse. Activation by TCR leads to antigen-dependent memory T-cell migration and retention to antigenic tissues. Together with PIK3CG participates in T-cell development. Contributes to T-helper cell expansion and differentiation. Required for T-cell migration mediated by homing receptors SELL/CD62L, CCR7 and S1PR1 and antigen dependent recruitment of T-cells. Together with PIK3CG is involved in natural killer (NK) cell development and migration towards the sites of inflammation. Participates in NK cell receptor activation. Plays a role in NK cell maturation and cytokine production. Together with PIK3CG is involved in neutrophil chemotaxis and extravasation. Together with PIK3CG participates in neutrophil respiratory burst. Plays important roles in mast-cell development and mast cell mediated allergic response. Involved in stem cell factor (SCF)-mediated proliferation, adhesion and migration. Required for allergen-IgE-induced degranulation and cytokine release. The lipid kinase activity is required for its biological function. This Mus musculus (Mouse) protein is Phosphatidylinositol 4,5-bisphosphate 3-kinase catalytic subunit delta isoform (Pik3cd).